A 362-amino-acid polypeptide reads, in one-letter code: Patr class I histocompatibility antigen, B-2 alpha chain (362 aa).

A signal peptide spans 1 to 24; sequence MQVTAPRTVLLLLSAALALTETWA. Residues 25-114 are alpha-1; it reads GSHSMKYFYT…LRGYYNQSEA (90 aa). Residues 25–308 lie on the Extracellular side of the membrane; it reads GSHSMKYFYT…EPSSQSTIPI (284 aa). An N-linked (GlcNAc...) asparagine glycan is attached at Asn-110. Residues 115–206 are alpha-2; that stretch reads GSHIIQRMYG…ENGKETLQRA (92 aa). 2 disulfides stabilise this stretch: Cys-125/Cys-188 and Cys-227/Cys-283. An alpha-3 region spans residues 207-298; it reads DPPKTHVTHH…GLPKPLTLRW (92 aa). Residues 209–295 form the Ig-like C1-type domain; the sequence is PKTHVTHHPI…QHEGLPKPLT (87 aa). The connecting peptide stretch occupies residues 299 to 308; it reads EPSSQSTIPI. A helical transmembrane segment spans residues 309 to 332; the sequence is VGIVAGLAVLAVVVIGAVVAAVMC. Residues 333–362 lie on the Cytoplasmic side of the membrane; the sequence is RRKSSGGKGGSYSQAASSDSAQGSDVSLTA. A disordered region spans residues 336–362; that stretch reads SSGGKGGSYSQAASSDSAQGSDVSLTA. A compositionally biased stretch (low complexity) spans 343–362; that stretch reads SYSQAASSDSAQGSDVSLTA.

This sequence belongs to the MHC class I family. In terms of assembly, heterodimer of an alpha chain and a beta chain (beta-2-microglobulin).

It localises to the membrane. Functionally, involved in the presentation of foreign antigens to the immune system. The polypeptide is Patr class I histocompatibility antigen, B-2 alpha chain (Pan troglodytes (Chimpanzee)).